Reading from the N-terminus, the 807-residue chain is Glycerol-3-phosphate acyltransferase (807 aa).

Residues C308–M313 carry the HXXXXD motif motif.

This sequence belongs to the GPAT/DAPAT family.

It localises to the cell inner membrane. It catalyses the reaction sn-glycerol 3-phosphate + an acyl-CoA = a 1-acyl-sn-glycero-3-phosphate + CoA. Its pathway is phospholipid metabolism; CDP-diacylglycerol biosynthesis; CDP-diacylglycerol from sn-glycerol 3-phosphate: step 1/3. The chain is Glycerol-3-phosphate acyltransferase from Shewanella baltica (strain OS223).